We begin with the raw amino-acid sequence, 324 residues long: Phospho-N-acetylmuramoyl-pentapeptide-transferase (324 aa).

The next 10 membrane-spanning stretches (helical) occupy residues 5-25 (VILF…PILI), 50-70 (GTPT…AIVM), 77-97 (LSAE…LGFL), 117-137 (LIGQ…CHFS), 147-167 (LSID…VGGS), 176-196 (LDGL…ILAW), 203-223 (VAIF…FNAH), 227-247 (VFMG…VAIL), 250-270 (LEIL…SVIL), and 302-322 (VVVT…YIEV).

It belongs to the glycosyltransferase 4 family. MraY subfamily. Requires Mg(2+) as cofactor.

It localises to the cell membrane. It carries out the reaction UDP-N-acetyl-alpha-D-muramoyl-L-alanyl-gamma-D-glutamyl-meso-2,6-diaminopimeloyl-D-alanyl-D-alanine + di-trans,octa-cis-undecaprenyl phosphate = di-trans,octa-cis-undecaprenyl diphospho-N-acetyl-alpha-D-muramoyl-L-alanyl-D-glutamyl-meso-2,6-diaminopimeloyl-D-alanyl-D-alanine + UMP. The protein operates within cell wall biogenesis; peptidoglycan biosynthesis. Its function is as follows. Catalyzes the initial step of the lipid cycle reactions in the biosynthesis of the cell wall peptidoglycan: transfers peptidoglycan precursor phospho-MurNAc-pentapeptide from UDP-MurNAc-pentapeptide onto the lipid carrier undecaprenyl phosphate, yielding undecaprenyl-pyrophosphoryl-MurNAc-pentapeptide, known as lipid I. The polypeptide is Phospho-N-acetylmuramoyl-pentapeptide-transferase (Bacillus velezensis (strain DSM 23117 / BGSC 10A6 / LMG 26770 / FZB42) (Bacillus amyloliquefaciens subsp. plantarum)).